We begin with the raw amino-acid sequence, 334 residues long: GTP 3',8-cyclase (334 aa).

Residues 13-239 (RFHRKFYYLR…KVKAANDGPA (227 aa)) enclose the Radical SAM core domain. Arg-22 contributes to the GTP binding site. Cys-29 and Cys-33 together coordinate [4Fe-4S] cluster. S-adenosyl-L-methionine is bound at residue Tyr-35. A [4Fe-4S] cluster-binding site is contributed by Cys-36. GTP is bound at residue Arg-73. Residue Gly-77 participates in S-adenosyl-L-methionine binding. GTP is bound at residue Thr-104. Ser-128 is an S-adenosyl-L-methionine binding site. Position 165 (Lys-165) interacts with GTP. Met-199 is a binding site for S-adenosyl-L-methionine. [4Fe-4S] cluster is bound by residues Cys-262 and Cys-265. Position 267 to 269 (267 to 269 (RLR)) interacts with GTP. Cys-279 lines the [4Fe-4S] cluster pocket.

This sequence belongs to the radical SAM superfamily. MoaA family. Monomer and homodimer. It depends on [4Fe-4S] cluster as a cofactor.

It catalyses the reaction GTP + AH2 + S-adenosyl-L-methionine = (8S)-3',8-cyclo-7,8-dihydroguanosine 5'-triphosphate + 5'-deoxyadenosine + L-methionine + A + H(+). The protein operates within cofactor biosynthesis; molybdopterin biosynthesis. In terms of biological role, catalyzes the cyclization of GTP to (8S)-3',8-cyclo-7,8-dihydroguanosine 5'-triphosphate. This is GTP 3',8-cyclase from Vibrio vulnificus (strain CMCP6).